Consider the following 371-residue polypeptide: Enoyl-[acyl-carrier-protein] reductase [NADH] 2, chloroplastic (371 aa).

The transit peptide at 1 to 67 (MGASVTTGLQ…SLNHKRFAVR (67 aa)) directs the protein to the chloroplast. Residues Gly87, Tyr94, 151 to 152 (DA), 198 to 199 (SL), and Leu248 contribute to the NAD(+) site. Active-site proton acceptor residues include Tyr250 and Tyr260. NAD(+)-binding positions include Lys268 and 298-302 (LGSRA).

The protein belongs to the short-chain dehydrogenases/reductases (SDR) family. FabI subfamily. Homotetramer.

Its subcellular location is the plastid. It localises to the chloroplast. It carries out the reaction a 2,3-saturated acyl-[ACP] + NAD(+) = a (2E)-enoyl-[ACP] + NADH + H(+). It functions in the pathway lipid metabolism; fatty acid biosynthesis. Its function is as follows. Catalyzes the NAD-dependent reduction of a carbon-carbon double bond in an enoyl moiety that is covalently linked to an acyl carrier protein (ACP). Catalyzes the last reduction step in the de novo synthesis cycle of fatty acids. Involved in the elongation cycle of fatty acids which are used in lipid metabolism. Required for normal plant growth. This is Enoyl-[acyl-carrier-protein] reductase [NADH] 2, chloroplastic from Oryza sativa subsp. japonica (Rice).